A 225-amino-acid polypeptide reads, in one-letter code: Cytidylate kinase (225 aa).

12-20 (GPSGAGKGT) provides a ligand contact to ATP.

This sequence belongs to the cytidylate kinase family. Type 1 subfamily.

It localises to the cytoplasm. It carries out the reaction CMP + ATP = CDP + ADP. The enzyme catalyses dCMP + ATP = dCDP + ADP. The chain is Cytidylate kinase from Proteus mirabilis (strain HI4320).